Here is a 3412-residue protein sequence, read N- to C-terminus: MSGRKAQGKTLGVNMVRRGARSLSNKIKQKTKQIGNRPGPSRGVQGFIFFFLFNILTGKKLTTHLKRLWRMLDPRQGLAVLRKVKRVVASLMIGLSSRKRRSNEMAMMPLLILSMVILAGGVTLVRKNRWLLLNVTAEDLGKTFSLGTGNCTTNILEAKYWCPDSMEYNCPNLSPREEPDDIDCWCYGVENVRVAYGRCDAVGRSKRSRRAIDLPTHENHGLKTRQEKWMAGRMGERQLQKIERWLVRNPFFAITALAIAYLVGNNMTQRVVIALLVLAVGPAYSAHCIGITDRDFIEGVHGGTWVSATLEQGKCVTVMAPDKPSLDISLQTVAIDGPAEARKVCYSAVLTHVKINDKCPSTGEAHLAEENDGDNACKRTYSDRGWGNGCGLFGKGSIVACAKFTCAKSMSLFEVDQTKIQYVIRAQLHVGAKQENWNTDIKTLKFDALSGSQEAEFTGYGKATLECQVQTAVDFGNSYIAEMEKDSWIVDRQWAQDLTLPWQSGSGGIWREMHHLVEFEPPHAATIRVLALGNQEGSLKTALTGAMRVTKDENDNNLYKLHGGHVSCRVKLSALTLKGTSYKMCTDKMSFVKNPTDTGHGTVVMQVKVPKGAPCKIPVIVADDLTAAVNKGILVTVNPIASTNDDEVLIEVNPPFGDSYIIVGTGDSRLTYQWHKEGSSIGKLFTQTMKGAERLAVMGDAAWDFSSAGGFFTSVGKGIHTVFGSAFQGLFGGLSWITKVIMGAVLIWVGINTRNMTMSMSMILVGVIMMFLSLGVGADQGCAVNFGKRELKCGDGIFVFRDSDDWLTKYSYYPEDPVKLASIIKASHEEGKCGLNSVDSLEHEMWRSRADEINAIFEENEVDISVVVQDPKNIYQRGTHPFSRIRDGLQYGWKTWGKNLIFSPGRKNGSFIIDGKSRKECPFSNRVWNSFQIEEFGMGVFTTRVFMDAVFDYSVDCDGAILGAAVNGKKSAHGSPTFWMGSHEVNGTWMVHTLETLDYKECEWPLTHTIGTSVEESDMFMPRSIGGPVSSHNHIPGYKVQTNGPWMQVPLEVRREPCPGTSVVLDTGCDGRGKSTRSTTDSGKIIPEWCCRSCTMPPVSFHGSDGCWYPMEIRPMKTHESHLVRSWVTAGEVHAVPFGLVSMMIAMEVVLRKRQGPKQMLVGGIILLGAMLVGQVTVLDLVKLIVAVGLHFHEINNGGDAMYMALIASFSIRPGLLVGFGLRTLWSPRERLVMAFGAAMVEVALGGMMGGLWQYLNAVSLCVLTINAISSRKASNAVLPLMALLTPVTMHEVRMATMLFCTVVIVGVLHQNAKDTSMQKTIPIVALTLTSYMGLTQPFLGLCAYMSTQVFGRRSIPVNEALAAAGLVGVLAGLAFQDMENFLGPIAVGGILMMLVSVAGKVDGLELKKLGEVSWEEEAEISGSSSRYDVALSEQGEFKLLSEDKVPWDQIVMTSLALVGAAIHPFALLLVLGGWVLHIKGARRSGDVLWDIPTPKVIEECEYLEDGIYGIFQSTFLGASQRGVGVAQGGVFHTMWHVTRGAFLLRNGKKLVPSWASVKEDLVAYGGSWKLDGKWDGEEEVQLIAAVPGKAVVNVQTKPSVFKVRNGGEIGAVALDYPSGTSGSPIVNRSGEVVGLYGNGILVGDNSFVSAISQTEVKEESKEELQEIPTMLKKGMTTILDFHPGAGKTRRFLPQILAECARRRLRTLVLAPTRVVLSEMKEAFHGLDVKFHTQAFSAHGSGKEVIDAMCHATLTYRMLEPTRAVNWEVIIMDEAHFLDPASIAARGWAAHRARANESATILMTATPPGTSDEFPHSNGEIEDVQTDIPSEPWTSGHEWILADKRPTAWFLPSIRAANVMAASLRKAGKSVVVLNRKTFEKEYPTIKQKRPDFILATDIAEMGANLCVERVLDCRTAYKPVLVDEGRKVAIKGPLRISASSAAQRRGRIGRNPNRDGDSYYYSEPTSEDNAHHVCWLEASMLLDNMEVRGGMVAPLYGIEGTKTPVSPGEMRLRDDQRRVFRELVRGCDLPVWLSWQVAKPGLKTNDRKWCFEGPEEHEILNDNGETVKCRSPGGAKKALRPRWCDERVSSDQSALADFIKFAEGRRGAAEMLVVLTELPDFLAKKGGEAMDTISVFLHSEEGSRAYRNALSMMPEAMTIVMLFILAGLLTSGMVIFFMSPKGMSRMSMAMGTMAGSGYLMFLGGVKPTHISYVMLIFFVLMVVIIPEPGQQRTIQDNQVAYLIIGILTLLSIVAANELGMLEKTKEDFFGRRNIATSGGTIPWSWPDLDLKPGAAWTVYVGIVTMLSPMLHHWIKVEYGNLSLSGIAQSASVLSFMDKGIPFMKMNISVVILLVSGWNSITVIPLLCGVGGAMLHWTLILPGIKAQQSKLAQKRVFHGVAKNPVVDGNPTADIEEAPEMPALYEKKLALYLLLALSLMSVAMCRTPFSLAEGIVLSSAALGPLIEGNTSLLWNGPMAVSMTGVMRGNYYAFVGVMYNLWKMKTGRRGSASGKTLGEVWKRELNLLDKQQFELYKRTDITEVDRDMARRHLAEGKVDTGVAVSRGTAKLRWFHERGYVKLEGRVMDLGCGRGGWCYYAAAQKEVSGVKGYTLGRDGHEKPMNVQSLGWNIVTFKDKTDIHRLEPAKCETLLCDIGESSPSSVTEGERTLRVLETIEKWLACGVDNFCVKVLAPYMPDVIEKLELLQRRFGGTIIRNPLSRNSTHEMYYVSGARSNITFTVNQTSRLLMRRMRRPTGKVTLEPDVILPIGTRSVETDKGPLDRDAIEERVERIKTEYAATWFYDNDNPYRTWHYCGSYITKTSGSAASMINGVIKILTFPWDRIEEVTRMAMTDTTPFGQQRVFKEKVDTRAKDPPAGTRKIMKVVNRWLFRHLAREKNPRLCTKEEFIAKVRSHAAVGAFLEEQEQWKTANEAVQDPKFWEMVDAERKLHQQGRCQSCVYNMMGKREKKLSEFGKAKGSRAIWYMWLGARFLEFEALGFLNEDHWASRENSGGGVEGIGLQYLGYVIKDLSTKEGGGFYADDTAGWDTRITEADLDDEQEIMSYMNAEQRKLAWAVMEMTYKNKVVKVLRPAPGGKAFMDIISRRDQRGSGQVVTYALNTITNLKVQLIRMAEAEMVINHQHVNECDEGVLARLDAWLAENGCDRLARMAVSGDDCVVRPVDDRFGLALSHLNAMSKVRKDISEWQPSKEWTDWENVPFCSHHFHELVLKDGRKVVVPCRDQDELIGRGRVSPGNGWMIKETACLSKAYANMWSLMYFHKRDMRLLSFAVSSAVPMAWVPSGRTTWSVHGKGEWMTTQDMLDVWNRVWVLNNPHMKDKTTVKEWRDVPYLTKRQDKLCGSLIGMTNRATWASHIHLVIHRIRTLIGQEKYTDYLTVMDRYSVDADLQPGELI.

Residues 1-104 are Cytoplasmic-facing; sequence MSGRKAQGKT…LSSRKRRSNE (104 aa). A hydrophobic; homodimerization of capsid protein C region spans residues 38–72; the sequence is PGPSRGVQGFIFFFLFNILTGKKLTTHLKRLWRML. Positions 102-121 are cleaved as a propeptide — ER anchor for the capsid protein C, removed in mature form by serine protease NS3; the sequence is SNEMAMMPLLILSMVILAGG. A helical membrane pass occupies residues 105 to 125; it reads MAMMPLLILSMVILAGGVTLV. At 126 to 244 the chain is on the extracellular side; that stretch reads RKNRWLLLNV…GERQLQKIER (119 aa). N-linked (GlcNAc...) asparagine; by host glycosylation is found at Asn-134 and Asn-150. The chain crosses the membrane as a helical span at residues 245–265; that stretch reads WLVRNPFFAITALAIAYLVGN. The Cytoplasmic segment spans residues 266–270; that stretch reads NMTQR. The helical transmembrane segment at 271–285 threads the bilayer; it reads VVIALLVLAVGPAYS. The Extracellular portion of the chain corresponds to 286 to 730; the sequence is AHCIGITDRD…TVFGSAFQGL (445 aa). Intrachain disulfides connect Cys-288–Cys-315, Cys-345–Cys-401, Cys-345–Cys-406, Cys-359–Cys-390, Cys-377–Cys-401, Cys-377–Cys-406, Cys-467–Cys-568, and Cys-585–Cys-615. The fusion peptide stretch occupies residues 383–396; that stretch reads DRGWGNGCGLFGKG. The helical transmembrane segment at 731 to 751 threads the bilayer; the sequence is FGGLSWITKVIMGAVLIWVGI. The Extracellular segment spans residues 752–757; the sequence is NTRNMT. The helical transmembrane segment at 758-778 threads the bilayer; the sequence is MSMSMILVGVIMMFLSLGVGA. Residues 779–1132 lie on the Extracellular side of the membrane; sequence DQGCAVNFGK…LVRSWVTAGE (354 aa). 6 cysteine pairs are disulfide-bonded: Cys-782–Cys-793, Cys-833–Cys-921, Cys-957–Cys-1002, Cys-1058–Cys-1107, Cys-1069–Cys-1091, and Cys-1090–Cys-1094. N-linked (GlcNAc...) asparagine; by host glycans are attached at residues Asn-908 and Asn-986. The helical transmembrane segment at 1133 to 1153 threads the bilayer; that stretch reads VHAVPFGLVSMMIAMEVVLRK. The Cytoplasmic segment spans residues 1154–1201; it reads RQGPKQMLVGGIILLGAMLVGQVTVLDLVKLIVAVGLHFHEINNGGDA. The helical transmembrane segment at 1202–1222 threads the bilayer; the sequence is MYMALIASFSIRPGLLVGFGL. Topologically, residues 1223-1287 are lumenal; the sequence is RTLWSPRERL…VLPLMALLTP (65 aa). A helical transmembrane segment spans residues 1288–1308; it reads VTMHEVRMATMLFCTVVIVGV. The Cytoplasmic segment spans residues 1309–1355; sequence LHQNAKDTSMQKTIPIVALTLTSYMGLTQPFLGLCAYMSTQVFGRRS. A helical membrane pass occupies residues 1356–1376; sequence IPVNEALAAAGLVGVLAGLAF. The Lumenal portion of the chain corresponds to 1377 to 1378; the sequence is QD. A helical transmembrane segment spans residues 1379–1399; sequence MENFLGPIAVGGILMMLVSVA. At 1400 to 1456 the chain is on the cytoplasmic side; it reads GKVDGLELKKLGEVSWEEEAEISGSSSRYDVALSEQGEFKLLSEDKVPWDQIVMTSL. An interacts with and activates NS3 protease region spans residues 1407 to 1446; that stretch reads LKKLGEVSWEEEAEISGSSSRYDVALSEQGEFKLLSEDKV. The segment at residues 1457–1477 is an intramembrane region (helical); it reads ALVGAAIHPFALLLVLGGWVL. Over 1478-2157 the chain is Cytoplasmic; it reads HIKGARRSGD…RNALSMMPEA (680 aa). Positions 1485-1665 constitute a Peptidase S7 domain; the sequence is SGDVLWDIPT…EVKEESKEEL (181 aa). Catalysis depends on charge relay system; for serine protease NS3 activity residues His-1537, Asp-1561, and Ser-1622. A Helicase ATP-binding domain is found at 1669 to 1825; sequence PTMLKKGMTT…HSNGEIEDVQ (157 aa). The important for RNA-binding stretch occupies residues 1673–1676; the sequence is KKGM. ATP is bound at residue 1682–1689; it reads FHPGAGKT. The DEAH box motif lies at 1773–1776; it reads DEAH. The Helicase C-terminal domain maps to 1820 to 1997; it reads EIEDVQTDIP…VRGGMVAPLY (178 aa). Lys-1877 is subject to N6-acetyllysine; by host. Residues 1942–1961 are disordered; that stretch reads AAQRRGRIGRNPNRDGDSYY. A helical transmembrane segment spans residues 2158 to 2178; the sequence is MTIVMLFILAGLLTSGMVIFF. Residues 2179-2186 lie on the Lumenal side of the membrane; sequence MSPKGMSR. The segment at residues 2187 to 2207 is an intramembrane region (helical); it reads MSMAMGTMAGSGYLMFLGGVK. Residues 2208 to 2209 lie on the Lumenal side of the membrane; that stretch reads PT. A helical transmembrane segment spans residues 2210–2230; that stretch reads HISYVMLIFFVLMVVIIPEPG. The Cytoplasmic segment spans residues 2231–2241; it reads QQRTIQDNQVA. Residues 2242-2262 traverse the membrane as a helical segment; it reads YLIIGILTLLSIVAANELGML. Topologically, residues 2263–2293 are lumenal; that stretch reads EKTKEDFFGRRNIATSGGTIPWSWPDLDLKP. The helical intramembrane region spans 2294-2314; sequence GAAWTVYVGIVTMLSPMLHHW. The Lumenal portion of the chain corresponds to 2315–2360; it reads IKVEYGNLSLSGIAQSASVLSFMDKGIPFMKMNISVVILLVSGWNS. Residues 2361 to 2380 traverse the membrane as a helical segment; it reads ITVIPLLCGVGGAMLHWTLI. At 2381–2421 the chain is on the cytoplasmic side; sequence LPGIKAQQSKLAQKRVFHGVAKNPVVDGNPTADIEEAPEMP. A helical membrane pass occupies residues 2422-2442; the sequence is ALYEKKLALYLLLALSLMSVA. Residues 2443 to 2445 are Lumenal-facing; sequence MCR. Residues 2446–2466 traverse the membrane as a helical segment; sequence TPFSLAEGIVLSSAALGPLIE. Topologically, residues 2467–3411 are cytoplasmic; sequence GNTSLLWNGP…VDADLQPGEL (945 aa). The mRNA cap 0-1 NS5-type MT domain maps to 2508–2772; it reads GSASGKTLGE…DVILPIGTRS (265 aa). Ser-2563 provides a ligand contact to S-adenosyl-L-methionine. At Ser-2563 the chain carries Phosphoserine. Lys-2568 (for 2'-O-MTase activity) is an active-site residue. Residues Gly-2593, Trp-2594, Thr-2611, Leu-2612, Asp-2638, and Ile-2639 each coordinate S-adenosyl-L-methionine. Catalysis depends on Asp-2653, which acts as the For 2'-O-MTase activity. Ile-2654 contacts S-adenosyl-L-methionine. Catalysis depends on for 2'-O-MTase activity residues Lys-2689 and Glu-2725. Residue Tyr-2727 coordinates S-adenosyl-L-methionine. The short motif at 2879–2912 is the Nuclear localization signal element; that stretch reads RKIMKVVNRWLFRHLAREKNPRLCTKEEFIAKVR. Glu-2946, His-2950, Cys-2955, and Cys-2958 together coordinate Zn(2+). Residues 3036–3188 form the RdRp catalytic domain; sequence GGFYADDTAG…RPVDDRFGLA (153 aa). Zn(2+)-binding residues include His-3223, Cys-3239, and Cys-3358.

The protein in the N-terminal section; belongs to the class I-like SAM-binding methyltransferase superfamily. mRNA cap 0-1 NS5-type methyltransferase family. In terms of assembly, homodimer. Interacts (via N-terminus) with host EXOC1 (via C-terminus); this interaction results in EXOC1 degradation through the proteasome degradation pathway. Forms heterodimers with envelope protein E in the endoplasmic reticulum and Golgi. As to quaternary structure, homodimer; in the endoplasmic reticulum and Golgi. Interacts with protein prM. Interacts with non-structural protein 1. In terms of assembly, homodimer; Homohexamer when secreted. Interacts with envelope protein E. Interacts (via N-terminus) with serine protease NS3. As to quaternary structure, forms a heterodimer with serine protease NS3. May form homooligomers. In terms of assembly, forms a heterodimer with NS2B. Interacts with non-structural protein 2A (via N-terminus). Interacts with NS4B. Interacts with unphosphorylated RNA-directed RNA polymerase NS5; this interaction stimulates RNA-directed RNA polymerase NS5 guanylyltransferase activity. NS3 interacts with host PDCD6IP; this interaction contributes to virion release. Interacts with serine protease NS3. As to quaternary structure, homodimer. Interacts with host STAT2; this interaction prevents the establishment of cellular antiviral state. Interacts with serine protease NS3. Interacts with host TRIM23; this interaction leads to NS5 ubiquitination. Post-translationally, specific enzymatic cleavages in vivo yield mature proteins. The nascent capsid protein C contains a C-terminal hydrophobic domain that act as a signal sequence for translocation of prM into the lumen of the ER. Mature capsid protein C is cleaved at a site upstream of this hydrophobic domain by NS3. prM is cleaved in post-Golgi vesicles by a host furin, releasing the mature small envelope protein M, and peptide pr. Non-structural protein 2A-alpha, a C-terminally truncated form of non-structural protein 2A, results from partial cleavage by NS3. Specific enzymatic cleavages in vivo yield mature proteins peptide 2K acts as a signal sequence and is removed from the N-terminus of NS4B by the host signal peptidase in the ER lumen. Signal cleavage at the 2K-4B site requires a prior NS3 protease-mediated cleavage at the 4A-2K site. Cleaved in post-Golgi vesicles by a host furin, releasing the mature small envelope protein M, and peptide pr. This cleavage is incomplete as up to 30% of viral particles still carry uncleaved prM. In terms of processing, N-glycosylated. Post-translationally, N-glycosylated. The excreted form is glycosylated and this is required for efficient secretion of the protein from infected cells. Polyubiquitinated; ubiquitination is probably mediated by host TRIM23 and is prerequisite for NS5-STAT2 interaction. NS5 is not ISGylated or sumoylated. In terms of processing, acetylated by host KAT5. Acetylation modulates NS3 RNA-binding and unwinding activities and plays an important positive role for viral replication. Post-translationally, phosphorylated on serines residues. This phosphorylation may trigger NS5 nuclear localization.

The protein resides in the virion. Its subcellular location is the host nucleus. It localises to the host cytoplasm. The protein localises to the host perinuclear region. It is found in the secreted. The protein resides in the virion membrane. Its subcellular location is the host endoplasmic reticulum membrane. The enzyme catalyses Selective hydrolysis of -Xaa-Xaa-|-Yaa- bonds in which each of the Xaa can be either Arg or Lys and Yaa can be either Ser or Ala.. The catalysed reaction is RNA(n) + a ribonucleoside 5'-triphosphate = RNA(n+1) + diphosphate. It carries out the reaction a ribonucleoside 5'-triphosphate + H2O = a ribonucleoside 5'-diphosphate + phosphate + H(+). It catalyses the reaction ATP + H2O = ADP + phosphate + H(+). The enzyme catalyses a 5'-end (5'-triphosphoguanosine)-ribonucleoside in mRNA + S-adenosyl-L-methionine = a 5'-end (N(7)-methyl 5'-triphosphoguanosine)-ribonucleoside in mRNA + S-adenosyl-L-homocysteine. The catalysed reaction is a 5'-end (N(7)-methyl 5'-triphosphoguanosine)-ribonucleoside in mRNA + S-adenosyl-L-methionine = a 5'-end (N(7)-methyl 5'-triphosphoguanosine)-(2'-O-methyl-ribonucleoside) in mRNA + S-adenosyl-L-homocysteine + H(+). Its function is as follows. Plays a role in virus budding by binding to the cell membrane and gathering the viral RNA into a nucleocapsid that forms the core of a mature virus particle. During virus entry, may induce genome penetration into the host cytoplasm after hemifusion induced by the surface proteins. Can migrate to the cell nucleus where it modulates host functions. Functionally, inhibits RNA silencing by interfering with host Dicer. In terms of biological role, prevents premature fusion activity of envelope proteins in trans-Golgi by binding to envelope protein E at pH6.0. After virion release in extracellular space, gets dissociated from E dimers. Acts as a chaperone for envelope protein E during intracellular virion assembly by masking and inactivating envelope protein E fusion peptide. prM is the only viral peptide matured by host furin in the trans-Golgi network probably to avoid catastrophic activation of the viral fusion activity in acidic Golgi compartment prior to virion release. prM-E cleavage is inefficient, and many virions are only partially matured. These uncleaved prM would play a role in immune evasion. Its function is as follows. May play a role in virus budding. Exerts cytotoxic effects by activating a mitochondrial apoptotic pathway through M ectodomain. May display a viroporin activity. Functionally, binds to host cell surface receptor and mediates fusion between viral and cellular membranes. Envelope protein is synthesized in the endoplasmic reticulum in the form of heterodimer with protein prM. They play a role in virion budding in the ER, and the newly formed immature particle is covered with 60 spikes composed of heterodimer between precursor prM and envelope protein E. The virion is transported to the Golgi apparatus where the low pH causes dissociation of PrM-E heterodimers and formation of E homodimers. prM-E cleavage is inefficient, and many virions are only partially matured. These uncleaved prM would play a role in immune evasion. In terms of biological role, involved in immune evasion, pathogenesis and viral replication. Once cleaved off the polyprotein, is targeted to three destinations: the viral replication cycle, the plasma membrane and the extracellular compartment. Essential for viral replication. Required for formation of the replication complex and recruitment of other non-structural proteins to the ER-derived membrane structures. Excreted as a hexameric lipoparticle that plays a role against host immune response. Antagonizing the complement function. Binds to the host macrophages and dendritic cells. Inhibits signal transduction originating from Toll-like receptor 3 (TLR3). Component of the viral RNA replication complex that functions in virion assembly and antagonizes the host immune response. Its function is as follows. Required cofactor for the serine protease function of NS3. May have membrane-destabilizing activity and form viroporins. Functionally, displays three enzymatic activities: serine protease, NTPase and RNA helicase. NS3 serine protease, in association with NS2B, performs its autocleavage and cleaves the polyprotein at dibasic sites in the cytoplasm: C-prM, NS2A-NS2B, NS2B-NS3, NS3-NS4A, NS4A-2K and NS4B-NS5. NS3 RNA helicase binds RNA and unwinds dsRNA in the 3' to 5' direction. Also plays a role in virus assembly. In terms of biological role, regulates the ATPase activity of the NS3 helicase activity. NS4A allows NS3 helicase to conserve energy during unwinding. Functions as a signal peptide for NS4B and is required for the interferon antagonism activity of the latter. Its function is as follows. Induces the formation of ER-derived membrane vesicles where the viral replication takes place. Inhibits interferon (IFN)-induced host STAT1 phosphorylation and nuclear translocation, thereby preventing the establishment of cellular antiviral state by blocking the IFN-alpha/beta pathway. Functionally, replicates the viral (+) and (-) RNA genome, and performs the capping of genomes in the cytoplasm. NS5 methylates viral RNA cap at guanine N-7 and ribose 2'-O positions. Besides its role in RNA genome replication, also prevents the establishment of cellular antiviral state by blocking the interferon-alpha/beta (IFN-alpha/beta) signaling pathway. IFN-I induces binding of NS5 to host IFN-activated transcription factor STAT2, preventing its transcriptional activity. Host TRIM23 is the E3 ligase that interacts with and polyubiquitinates NS5 to promote its binding to STAT2 and trigger IFN-I signaling inhibition. This is Genome polyprotein from Yellow fever virus (isolate Ethiopia/Couma/1961) (YFV).